A 373-amino-acid polypeptide reads, in one-letter code: tRNA-specific 2-thiouridylase MnmA (373 aa).

ATP is bound by residues 12-19 (GMSGGVDS) and Met-38. Residues 98–100 (NPD) form an interaction with target base in tRNA region. The active-site Nucleophile is the Cys-103. Cysteines 103 and 200 form a disulfide. Residue Gly-127 coordinates ATP. The tract at residues 150-152 (KDQ) is interaction with tRNA. The active-site Cysteine persulfide intermediate is the Cys-200. The tract at residues 312–313 (RY) is interaction with tRNA.

This sequence belongs to the MnmA/TRMU family.

The protein localises to the cytoplasm. It carries out the reaction S-sulfanyl-L-cysteinyl-[protein] + uridine(34) in tRNA + AH2 + ATP = 2-thiouridine(34) in tRNA + L-cysteinyl-[protein] + A + AMP + diphosphate + H(+). Catalyzes the 2-thiolation of uridine at the wobble position (U34) of tRNA, leading to the formation of s(2)U34. This chain is tRNA-specific 2-thiouridylase MnmA, found in Streptococcus mutans serotype c (strain ATCC 700610 / UA159).